The primary structure comprises 529 residues: Heat shock factor protein 1 (529 aa).

Met1 carries the N-acetylmethionine modification. The tract at residues 15–120 (VPAFLTKLWT…LLENIKRKVT (106 aa)) is DNA-binding domain. The residue at position 80 (Lys80) is an N6-acetyllysine. Lys91 bears the N6-acetyllysine; alternate mark. Residue Lys91 forms a Glycyl lysine isopeptide (Lys-Gly) (interchain with G-Cter in SUMO2); alternate linkage. At Lys118 the chain carries N6-acetyllysine. At Ser121 the chain carries Phosphoserine; by MAPKAPK2. Glycyl lysine isopeptide (Lys-Gly) (interchain with G-Cter in SUMO2) cross-links involve residues Lys126 and Lys131. Residues 130 to 203 (IKIRQDSVTK…ISLVQSNRIL (74 aa)) are hydrophobic repeat HR-A/B. Position 142 is a phosphothreonine; by CK2 (Thr142). Residues Lys150 and Lys188 each carry the N6-acetyllysine modification. The segment at 203-224 (LGVKRKIPLMLNDSGSAHSMPK) is d domain. An N6-acetyllysine; alternate modification is found at Lys208. Lys208 is covalently cross-linked (Glycyl lysine isopeptide (Lys-Gly) (interchain with G-Cter in SUMO2); alternate). Ser216 carries the phosphoserine; by PLK1 modification. Residues 221–310 (SMPKYSRQFS…PPSPPQSPRV (90 aa)) form a regulatory domain region. Lys224 participates in a covalent cross-link: Glycyl lysine isopeptide (Lys-Gly) (interchain with G-Cter in SUMO2). Ser230 is modified (phosphoserine; by CAMK2A). Phosphoserine occurs at positions 275 and 292. The segment at 295–324 (VRVKEEPPSPPQSPRVEEASPGRPSSVDTL) is disordered. At Lys298 the chain carries N6-acetyllysine; alternate. A Glycyl lysine isopeptide (Lys-Gly) (interchain with G-Cter in SUMO2); alternate cross-link involves residue Lys298. A Glycyl lysine isopeptide (Lys-Gly) (interchain with G-Cter in SUMO); alternate cross-link involves residue Lys298. Ser303 bears the Phosphoserine; by GSK3-beta mark. Ser307 is modified (phosphoserine; by MAPK3). A phosphoserine mark is found at Ser314 and Ser319. Phosphoserine; by PKA is present on Ser320. Phosphothreonine is present on Thr323. At Ser326 the chain carries Phosphoserine; by MAPK12. The tract at residues 336–372 (RESEPAPASVTALTDARGHTDTEGRPPSPPPTSTPEK) is disordered. Residue Ser344 is modified to Phosphoserine. Phosphoserine; by MAPK8 is present on Ser363. The interval 371 to 529 (EKCLSVACLD…PPKAKDPTVS (159 aa)) is transactivation domain. Residues 384 to 409 (LSDHLDAMDSNLDNLQTMLSSHGFSV) form a hydrophobic repeat HR-C region. The 9aaTAD motif lies at 412 to 420 (SALLDLFSP). Residue Ser419 is modified to Phosphoserine; by PLK1. Ser444 is subject to Phosphoserine. 2 disordered regions span residues 444–463 (SPQE…DSGK) and 502–529 (EGDG…PTVS). Lys524 is modified (N6-acetyllysine).

Belongs to the HSF family. In terms of assembly, monomer; cytoplasmic latent and transcriptionally inactive monomeric form in unstressed cells. Homotrimer; in response to stress, such as heat shock, homotrimerizes and translocates into the nucleus, binds to heat shock element (HSE) sequences in promoter of heat shock protein (HSP) genes and acquires transcriptional ability. Interacts (via monomeric form) with FKBP4; this interaction occurs in unstressed cells. Associates (via monomeric form) with HSP90 proteins in a multichaperone complex in unnstressed cell; this association maintains HSF1 in a non-DNA-binding and transcriptional inactive form by preventing HSF1 homotrimerization. Homotrimeric transactivation activity is modulated by protein-protein interactions and post-translational modifications. Interacts with HSP90AA1; this interaction is decreased in a IER5-dependent manner, promoting HSF1 accumulation in the nucleus, homotrimerization and DNA-binding activities. Part (via regulatory domain in the homotrimeric form) of a large heat shock-induced HSP90-dependent multichaperone complex at least composed of FKBP4, FKBP5, HSP90 proteins, PPID, PPP5C and PTGES3; this association maintains the HSF1 homotrimeric DNA-bound form in a transcriptionally inactive form. Interacts with BAG3 (via BAG domain); this interaction occurs in normal and heat-shocked cells promoting nuclear shuttling of HSF1 in a BAG3-dependent manner. Interacts (via homotrimeric and hyperphosphorylated form) with FKBP4; this interaction occurs upon heat shock in a HSP90-dependent multichaperone complex. Interacts (via homotrimeric form preferentially) with EEF1A proteins. In heat shocked cells, stress-denatured proteins compete with HSF1 homotrimeric DNA-bound form for association of the HSP90-dependent multichaperone complex, and hence alleviating repression of HSF1-mediated transcriptional activity. Interacts (via homotrimeric form preferentially) with DAXX; this interaction relieves homotrimeric HSF1 from repression of its transcriptional activity by HSP90-dependent multichaperone complex upon heat shock. Interacts (via D domain and preferentially with hyperphosphorylated form) with JNK1; this interaction occurs under both normal growth conditions and immediately upon heat shock. Interacts (via D domain and preferentially with hyperphosphorylated form) with MAPK3; this interaction occurs upon heat shock. Interacts with IER5 (via central region); this interaction promotes PPP2CA-induced dephosphorylation on Ser-121, Ser-307, Ser-314, Thr-323 and Thr-367 and HSF1 transactivation activity. Found in a ribonucleoprotein complex composed of the HSF1 homotrimeric form, translation elongation factor eEF1A proteins and non-coding RNA heat shock RNA-1 (HSR1); this complex occurs upon heat shock and stimulates HSF1 DNA-binding activity. Interacts (via transactivation domain) with HSPA1A/HSP70 and DNAJB1; these interactions result in the inhibition of heat shock- and HSF1-induced transcriptional activity during the attenuation and recovery phase from heat shock. Interacts (via Ser-303 and Ser-307 phosphorylated form) with YWHAE; this interaction promotes HSF1 sequestration in the cytoplasm in an ERK-dependent manner. Found in a complex with IER5 and PPP2CA. Interacts with TPR; this interaction increases upon heat shock and stimulates export of HSP70 mRNA. Interacts with SYMPK (via N-terminus) and CSTF2; these interactions occur upon heat shock. Interacts (via transactivation domain) with HSPA8. Interacts with EEF1D; this interaction occurs at heat shock promoter element (HSE) sequences. Interacts with MAPKAPK2. Interacts with PRKACA/PKA. Interacts (via transactivation domain) with GTF2A2. Interacts (via transactivation domain) with GTF2B. Interacts (via transactivation domain) with TBP. Interacts with CDK9, CCNT1 and EP300. Interacts (via N-terminus) with XRCC5 (via N-terminus) and XRCC6 (via N-terminus); these interactions are direct and prevent XRCC5/XRCC6 heterodimeric binding and non-homologous end joining (NHEJ) repair activities induced by ionizing radiation (IR). Interacts with PLK1; this interaction occurs during the early mitotic period, increases upon heat shock but does not modulate neither HSF1 homotrimerization and DNA-binding activities. Interacts (via Ser-216 phosphorylated form) with CDC20; this interaction occurs in mitosis in a MAD2L1-dependent manner and prevents PLK1-stimulated degradation of HSF1 by blocking the recruitment of the SCF(BTRC) ubiquitin ligase complex. Interacts with MAD2L1; this interaction occurs in mitosis. Interacts with BTRC; this interaction occurs during mitosis, induces its ubiquitin-dependent degradation following stimulus-dependent phosphorylation at Ser-216, a process inhibited by CDC20. Interacts with HSP90AA1 and HSP90AB1. Forms a complex with TTC5/STRAP and p300/EP300; these interactions augment chromatin-bound HSF1 and p300/EP300 histone acetyltransferase activity. In terms of processing, phosphorylated. Phosphorylated in unstressed cells; this phosphorylation is constitutive and implicated in the repression of HSF1 transcriptional activity. Phosphorylated on Ser-121 by MAPKAPK2; this phosphorylation promotes interaction with HSP90 proteins and inhibits HSF1 homotrimerization, DNA-binding and transactivation activities. Phosphorylation on Ser-303 by GSK3B/GSK3-beta and on Ser-307 by MAPK3 within the regulatory domain is involved in the repression of HSF1 transcriptional activity and occurs in a RAF1-dependent manner. Phosphorylation on Ser-303 and Ser-307 increases HSF1 nuclear export in a YWHAE- and XPO1/CRM1-dependent manner. Phosphorylation on Ser-307 is a prerequisite for phosphorylation on Ser-303. According to PubMed:9535852, Ser-303 is not phosphorylated in unstressed cells. Phosphorylated on Ser-419 by PLK1; phosphorylation promotes nuclear translocation upon heat shock. Hyperphosphorylated upon heat shock and during the attenuation and recovery phase period of the heat shock response. Phosphorylated on Thr-142; this phosphorylation increases HSF1 transactivation activity upon heat shock. Phosphorylation on Ser-230 by CAMK2A; this phosphorylation enhances HSF1 transactivation activity upon heat shock. Phosphorylation on Ser-326 by MAPK12; this phosphorylation enhances HSF1 nuclear translocation, homotrimerization and transactivation activities upon heat shock. Phosphorylated on Ser-320 by PRKACA/PKA; this phosphorylation promotes nuclear localization and transcriptional activity upon heat shock. Phosphorylated on Ser-363 by MAPK8; this phosphorylation occurs upon heat shock, induces HSF1 translocation into nuclear stress bodies and negatively regulates transactivation activity. Neither basal nor stress-inducible phosphorylation on Ser-230, Ser-292, Ser-303, Ser-307, Ser-314, Ser-319, Ser-320, Thr-323, Ser-326, Ser-338, Ser-344, Ser-363, Thr-367, Ser-368 and Thr-369 within the regulatory domain is involved in the regulation of HSF1 subcellular localization or DNA-binding activity; however, it negatively regulates HSF1 transactivation activity. Phosphorylated on Ser-216 by PLK1 in the early mitotic period; this phosphorylation regulates HSF1 localization to the spindle pole, the recruitment of the SCF(BTRC) ubiquitin ligase complex inducing HSF1 degradation, and hence mitotic progression. Dephosphorylated on Ser-121, Ser-307, Ser-314, Thr-323 and Thr-367 by phosphatase PPP2CA in an IER5-dependent manner, leading to HSF1-mediated transactivation activity. Sumoylated with SUMO1 and SUMO2 upon heat shock in a ERK2-dependent manner. Sumoylated by SUMO1 on Lys-298; sumoylation occurs upon heat shock and promotes its localization to nuclear stress bodies and DNA-binding activity. Phosphorylation on Ser-303 and Ser-307 is probably a prerequisite for sumoylation. Post-translationally, acetylated on Lys-118; this acetylation is decreased in a IER5-dependent manner. Acetylated on Lys-118, Lys-208 and Lys-298; these acetylations occur in a EP300-dependent manner. Acetylated on Lys-80; this acetylation inhibits DNA-binding activity upon heat shock. Deacetylated on Lys-80 by SIRT1; this deacetylation increases DNA-binding activity. In terms of processing, ubiquitinated by SCF(BTRC) and degraded following stimulus-dependent phosphorylation at Ser-216 by PLK1 in mitosis. Polyubiquitinated. Undergoes proteasomal degradation upon heat shock and during the attenuation and recovery phase period of the heat shock response.

It is found in the nucleus. It localises to the cytoplasm. The protein resides in the nucleoplasm. Its subcellular location is the perinuclear region. The protein localises to the cytoskeleton. It is found in the spindle pole. It localises to the microtubule organizing center. The protein resides in the centrosome. Its subcellular location is the chromosome. The protein localises to the centromere. It is found in the kinetochore. Functions as a stress-inducible and DNA-binding transcription factor that plays a central role in the transcriptional activation of the heat shock response (HSR), leading to the expression of a large class of molecular chaperones, heat shock proteins (HSPs), that protect cells from cellular insult damage. In unstressed cells, is present in a HSP90-containing multichaperone complex that maintains it in a non-DNA-binding inactivated monomeric form. Upon exposure to heat and other stress stimuli, undergoes homotrimerization and activates HSP gene transcription through binding to site-specific heat shock elements (HSEs) present in the promoter regions of HSP genes. Upon heat shock stress, forms a chromatin-associated complex with TTC5/STRAP and p300/EP300 to stimulate HSR transcription, therefore increasing cell survival. Activation is reversible, and during the attenuation and recovery phase period of the HSR, returns to its unactivated form. Binds to inverted 5'-NGAAN-3' pentamer DNA sequences. Binds to chromatin at heat shock gene promoters. Activates transcription of transcription factor FOXR1 which in turn activates transcription of the heat shock chaperones HSPA1A and HSPA6 and the antioxidant NADPH-dependent reductase DHRS2. Also serves several other functions independently of its transcriptional activity. Involved in the repression of Ras-induced transcriptional activation of the c-fos gene in heat-stressed cells. Positively regulates pre-mRNA 3'-end processing and polyadenylation of HSP70 mRNA upon heat-stressed cells in a symplekin (SYMPK)-dependent manner. Plays a role in nuclear export of stress-induced HSP70 mRNA. Plays a role in the regulation of mitotic progression. Also plays a role as a negative regulator of non-homologous end joining (NHEJ) repair activity in a DNA damage-dependent manner. Involved in stress-induced cancer cell proliferation in a IER5-dependent manner. Its function is as follows. (Microbial infection) Plays a role in latent human immunodeficiency virus (HIV-1) transcriptional reactivation. Binds to the HIV-1 long terminal repeat promoter (LTR) to reactivate viral transcription by recruiting cellular transcriptional elongation factors, such as CDK9, CCNT1 and EP300. This chain is Heat shock factor protein 1, found in Homo sapiens (Human).